Reading from the N-terminus, the 597-residue chain is uncharacterized protein (597 aa).

A compositionally biased stretch (basic and acidic residues) spans 1–23; that stretch reads MSHEGSRQARDRGVTRSKAEKAR. Disordered regions lie at residues 1-32 and 171-192; these read MSHE…VPQV and RESQ…NPRP. Low complexity predominate over residues 175–186; it reads EPTQSSEPSAEP. A phosphoserine mark is found at Ser-237 and Ser-241. 2 disordered regions span residues 302 to 335 and 549 to 569; these read SLLS…MRLD and EAEE…GVSK. The segment covering 557–568 has biased composition (polar residues); it reads APEQQPIQTGVS.

This is an uncharacterized protein from Rattus norvegicus (Rat).